Here is a 321-residue protein sequence, read N- to C-terminus: Polyamine aminopropyltransferase (321 aa).

One can recognise a PABS domain in the interval 23–256 (HLLYLEHAGP…DEWSFSFGSD (234 aa)). Gln53 is an S-methyl-5'-thioadenosine binding site. 2 residues coordinate spermidine: His84 and Asp108. S-methyl-5'-thioadenosine contacts are provided by residues Glu127 and 159–160 (DG). Asp177 acts as the Proton acceptor in catalysis.

Belongs to the spermidine/spermine synthase family. As to quaternary structure, homodimer or homotetramer.

It is found in the cytoplasm. It catalyses the reaction S-adenosyl 3-(methylsulfanyl)propylamine + putrescine = S-methyl-5'-thioadenosine + spermidine + H(+). The protein operates within amine and polyamine biosynthesis; spermidine biosynthesis; spermidine from putrescine: step 1/1. Functionally, catalyzes the irreversible transfer of a propylamine group from the amino donor S-adenosylmethioninamine (decarboxy-AdoMet) to putrescine (1,4-diaminobutane) to yield spermidine. This is Polyamine aminopropyltransferase from Korarchaeum cryptofilum (strain OPF8).